The sequence spans 169 residues: 3-hydroxyacyl-[acyl-carrier-protein] dehydratase FabZ (169 aa).

Residue His-74 is part of the active site.

Belongs to the thioester dehydratase family. FabZ subfamily.

The protein resides in the cytoplasm. The catalysed reaction is a (3R)-hydroxyacyl-[ACP] = a (2E)-enoyl-[ACP] + H2O. Its function is as follows. Involved in unsaturated fatty acids biosynthesis. Catalyzes the dehydration of short chain beta-hydroxyacyl-ACPs and long chain saturated and unsaturated beta-hydroxyacyl-ACPs. The protein is 3-hydroxyacyl-[acyl-carrier-protein] dehydratase FabZ of Gluconobacter oxydans (strain 621H) (Gluconobacter suboxydans).